The primary structure comprises 654 residues: DNA ligase (654 aa).

NAD(+) is bound by residues 34–38, 83–84, and glutamate 114; these read DLEYD and SL. Lysine 116 acts as the N6-AMP-lysine intermediate in catalysis. Positions 137, 171, 280, and 304 each coordinate NAD(+). Cysteine 396, cysteine 399, cysteine 414, and cysteine 419 together coordinate Zn(2+). Residues 577 to 654 form the BRCT domain; the sequence is VISTILSGYT…EEQFYDLIKQ (78 aa).

It belongs to the NAD-dependent DNA ligase family. LigA subfamily. Mg(2+) is required as a cofactor. Requires Mn(2+) as cofactor.

It catalyses the reaction NAD(+) + (deoxyribonucleotide)n-3'-hydroxyl + 5'-phospho-(deoxyribonucleotide)m = (deoxyribonucleotide)n+m + AMP + beta-nicotinamide D-nucleotide.. Functionally, DNA ligase that catalyzes the formation of phosphodiester linkages between 5'-phosphoryl and 3'-hydroxyl groups in double-stranded DNA using NAD as a coenzyme and as the energy source for the reaction. It is essential for DNA replication and repair of damaged DNA. This chain is DNA ligase, found in Mycoplasmopsis agalactiae (strain NCTC 10123 / CIP 59.7 / PG2) (Mycoplasma agalactiae).